Reading from the N-terminus, the 977-residue chain is Zinc finger CCCH domain-containing protein 7B (977 aa).

3 TPR repeats span residues 1 to 27, 36 to 69, and 82 to 115; these read MERQ…KQEE, VQNL…ADYA, and CKLH…DSES. Ser217 is modified (phosphoserine). Residues 248–256 carry the LD motif; interaction with NSP3 motif; sequence STDSLDDFS. A phosphoserine mark is found at Ser364 and Ser367. The segment at 365 to 403 is disordered; that stretch reads FGSTRGSLDKPDSFMEETNSQDHRPPSGAQKPAPSPEPC. 3 consecutive C3H1-type zinc fingers follow at residues 484–508, 616–638, and 754–782; these read LCKD…HQEE, VCRH…HSFI, and PQQY…HSPE. A C2H2-type zinc finger spans residues 842–866; that stretch reads YHCWLCGKNSNSKKQWQQHIQSEKH. The segment at 886 to 914 adopts a C3H1-type 4 zinc-finger fold; that stretch reads MGEFRLCDRLQKGKACPDGDKCRCAHGQE.

As to quaternary structure, (Microbial infection) Interacts (via LD motif) with rotavirus A NSP3 (via the coiled-coil region).

Its subcellular location is the nucleus. In terms of biological role, may be a specific regulator of miRNA biogenesis. Binds to microRNAs MIR7-1, MIR16-2 and MIR29A hairpins recognizing the 'ATA(A/T)' motif in the apical loop. The chain is Zinc finger CCCH domain-containing protein 7B (ZC3H7B) from Homo sapiens (Human).